A 548-amino-acid chain; its full sequence is Chaperonin GroEL (548 aa).

Residues 30–33, Lys51, 87–91, Gly415, 478–480, and Asp494 contribute to the ATP site; these read TLGP, DGTTT, and NAA.

It belongs to the chaperonin (HSP60) family. Forms a cylinder of 14 subunits composed of two heptameric rings stacked back-to-back. Interacts with the co-chaperonin GroES.

The protein localises to the cytoplasm. It carries out the reaction ATP + H2O + a folded polypeptide = ADP + phosphate + an unfolded polypeptide.. Functionally, together with its co-chaperonin GroES, plays an essential role in assisting protein folding. The GroEL-GroES system forms a nano-cage that allows encapsulation of the non-native substrate proteins and provides a physical environment optimized to promote and accelerate protein folding. This chain is Chaperonin GroEL, found in Janthinobacterium sp. (strain Marseille) (Minibacterium massiliensis).